Consider the following 469-residue polypeptide: 1-aminocyclopropane-1-carboxylate synthase 3 (469 aa).

K272 bears the N6-(pyridoxal phosphate)lysine mark. Positions 432 to 452 are disordered; sequence APNATNHQNQQQSNANSKKKS. Positions 437–447 are enriched in low complexity; the sequence is NHQNQQQSNAN.

It belongs to the class-I pyridoxal-phosphate-dependent aminotransferase family. Homodimer. Pyridoxal 5'-phosphate is required as a cofactor.

It catalyses the reaction S-adenosyl-L-methionine = 1-aminocyclopropane-1-carboxylate + S-methyl-5'-thioadenosine + H(+). The protein operates within alkene biosynthesis; ethylene biosynthesis via S-adenosyl-L-methionine; ethylene from S-adenosyl-L-methionine: step 1/2. Catalyzes the formation of 1-aminocyclopropane-1-carboxylate, a direct precursor of ethylene in higher plants. This Solanum lycopersicum (Tomato) protein is 1-aminocyclopropane-1-carboxylate synthase 3 (ACS3).